A 251-amino-acid polypeptide reads, in one-letter code: Zinc import ATP-binding protein ZnuC (251 aa).

The ABC transporter domain occupies 5–220 (VSLENVSVSF…PEFISMFGPR (216 aa)). ATP is bound at residue 37–44 (GPNGAGKS).

It belongs to the ABC transporter superfamily. Zinc importer (TC 3.A.1.15.5) family. In terms of assembly, the complex is composed of two ATP-binding proteins (ZnuC), two transmembrane proteins (ZnuB) and a solute-binding protein (ZnuA).

It localises to the cell inner membrane. The catalysed reaction is Zn(2+)(out) + ATP(in) + H2O(in) = Zn(2+)(in) + ADP(in) + phosphate(in) + H(+)(in). In terms of biological role, part of the ABC transporter complex ZnuABC involved in zinc import. Responsible for energy coupling to the transport system. In Salmonella choleraesuis (strain SC-B67), this protein is Zinc import ATP-binding protein ZnuC.